The sequence spans 110 residues: U1-lycotoxin-Ls1ee (110 aa).

Residues 1–20 (MKFVLLFGVLLVTLFSYSSA) form the signal peptide. Residues 21-44 (EMLDDFDQADEDELLSLIEKEEAR) constitute a propeptide that is removed on maturation. 4 cysteine pairs are disulfide-bonded: C47–C62, C54–C71, C61–C89, and C73–C87.

Belongs to the neurotoxin 19 (CSTX) family. 03 subfamily. As to expression, expressed by the venom gland.

The protein resides in the secreted. This Lycosa singoriensis (Wolf spider) protein is U1-lycotoxin-Ls1ee.